The primary structure comprises 448 residues: Phosphoglucosamine mutase (448 aa).

Catalysis depends on serine 100, which acts as the Phosphoserine intermediate. The Mg(2+) site is built by serine 100, aspartate 240, aspartate 242, and aspartate 244. Residue serine 100 is modified to Phosphoserine.

The protein belongs to the phosphohexose mutase family. It depends on Mg(2+) as a cofactor. In terms of processing, activated by phosphorylation.

It catalyses the reaction alpha-D-glucosamine 1-phosphate = D-glucosamine 6-phosphate. In terms of biological role, catalyzes the conversion of glucosamine-6-phosphate to glucosamine-1-phosphate. The chain is Phosphoglucosamine mutase from Bacillus licheniformis (strain ATCC 14580 / DSM 13 / JCM 2505 / CCUG 7422 / NBRC 12200 / NCIMB 9375 / NCTC 10341 / NRRL NRS-1264 / Gibson 46).